We begin with the raw amino-acid sequence, 254 residues long: Peroxisomal membrane protein 11 homolog (254 aa).

The Cytoplasmic portion of the chain corresponds to M1–P91. The helical transmembrane segment at F92–F112 threads the bilayer. At D113–K227 the chain is on the lumenal side. A helical membrane pass occupies residues I228–A248. Residues Y249–K254 lie on the Cytoplasmic side of the membrane.

This sequence belongs to the peroxin-11 family.

The protein localises to the peroxisome membrane. Its function is as follows. Involved in peroxisomal proliferation. Could participate in peroxisomal elongation or fission. May be involved in parceling of peroxisomes into regular quanta. The chain is Peroxisomal membrane protein 11 homolog (pex11) from Dictyostelium discoideum (Social amoeba).